Here is a 571-residue protein sequence, read N- to C-terminus: Vesicle-associated protein 1-4 (571 aa).

One can recognise an MSP 1 domain in the interval 1-126; the sequence is MSTDELLTFD…EETIFKIIYV (126 aa). The disordered stretch occupies residues 132-154; the sequence is QSPVQEGLEDGSSPSASVSDKGN. The span at 143-153 shows a compositional bias: polar residues; the sequence is SSPSASVSDKG. The 121-residue stretch at 176 to 296 folds into the MSP 2 domain; sequence LLIIDPVDVQ…EETRLKVMYV (121 aa). Residues 297–322 are disordered; sequence TPPQPPSPVQEGTEEGSSPRASVSDN. The span at 311–322 shows a compositional bias: polar residues; the sequence is EGSSPRASVSDN. The TIR domain occupies 356–493; it reads PQYQVFINFR…KWKEALSSVF (138 aa). Glutamate 430 is an active-site residue.

It belongs to the VAMP-associated protein (VAP) (TC 9.B.17) family.

The enzyme catalyses NAD(+) + H2O = ADP-D-ribose + nicotinamide + H(+). Its function is as follows. May play a role in vesicle trafficking. The sequence is that of Vesicle-associated protein 1-4 (PVA14) from Arabidopsis thaliana (Mouse-ear cress).